The following is a 144-amino-acid chain: FK506-binding protein 2 (144 aa).

A signal peptide spans 1–20; the sequence is MARIIVLIVAFMALIAGVFA. The region spanning 48–136 is the PPIase FKBP-type domain; sequence GDTVSVHYTG…IFTTELVSID (89 aa). The Prevents secretion from ER motif lies at 141-144; that stretch reads RDEL.

It belongs to the FKBP-type PPIase family. FKBP2 subfamily.

The protein localises to the endoplasmic reticulum. It carries out the reaction [protein]-peptidylproline (omega=180) = [protein]-peptidylproline (omega=0). With respect to regulation, inhibited by both FK506 and rapamycin. PPIases accelerate the folding of proteins. It catalyzes the cis-trans isomerization of proline imidic peptide bonds in oligopeptides. In Yarrowia lipolytica (strain CLIB 122 / E 150) (Yeast), this protein is FK506-binding protein 2 (FPR2).